The sequence spans 120 residues: UPF0231 protein Spro_4007 (120 aa).

It belongs to the UPF0231 family.

This is UPF0231 protein Spro_4007 from Serratia proteamaculans (strain 568).